We begin with the raw amino-acid sequence, 435 residues long: Mitochondrial association factor 1 form a1 (435 aa).

The N-terminal stretch at 1–20 (MWRIWRCRLSFLFATGCLLG) is a signal peptide. At 21–95 (ALTAGLGSQM…SVTARRRRNR (75 aa)) the chain is on the vacuolar side. The segment at 43–88 (GVADASQEAGDVVEERTERTEEQVFAPGPPRRHSSESLFPRNASVT) is disordered. Positions 55 to 64 (VEERTERTEE) are enriched in basic and acidic residues. Residues 96–116 (RIAPIATAVGVAVILAALYVL) form a helical membrane-spanning segment. The Cytoplasmic segment spans residues 117-435 (RRRRAQPPQE…ERKYKFPQGD (319 aa)). The disordered stretch occupies residues 120 to 162 (RAQPPQEPEPPTRLRTPRPRAPSEQQQPSESEPPAEVPMTPDP). Low complexity predominate over residues 141 to 153 (PSEQQQPSESEPP).

As to quaternary structure, interacts with host SAMM50.

The protein localises to the parasitophorous vacuole membrane. Its function is as follows. During host cell infection by tachyzoites, does not play a role in tethering the parasitophorous vacuole to the host mitochondria, probably because it does not bind host mitochondrial import protein TOMM70. The chain is Mitochondrial association factor 1 form a1 from Toxoplasma gondii.